Consider the following 455-residue polypeptide: Fumarate hydratase class II (455 aa).

Substrate is bound by residues 96–98 (SGT), 122–125 (HPND), 132–134 (SSN), and Thr180. His181 functions as the Proton donor/acceptor in the catalytic mechanism. Residue Ser311 is part of the active site. Residues Ser312 and 317-319 (KVN) each bind substrate.

It belongs to the class-II fumarase/aspartase family. Fumarase subfamily. As to quaternary structure, homotetramer.

It localises to the cytoplasm. It catalyses the reaction (S)-malate = fumarate + H2O. It functions in the pathway carbohydrate metabolism; tricarboxylic acid cycle; (S)-malate from fumarate: step 1/1. In terms of biological role, involved in the TCA cycle. Catalyzes the stereospecific interconversion of fumarate to L-malate. In Listeria monocytogenes serovar 1/2a (strain ATCC BAA-679 / EGD-e), this protein is Fumarate hydratase class II.